Here is a 471-residue protein sequence, read N- to C-terminus: Argininosuccinate lyase (471 aa).

This sequence belongs to the lyase 1 family. Argininosuccinate lyase subfamily.

It localises to the cytoplasm. It catalyses the reaction 2-(N(omega)-L-arginino)succinate = fumarate + L-arginine. The protein operates within amino-acid biosynthesis; L-arginine biosynthesis; L-arginine from L-ornithine and carbamoyl phosphate: step 3/3. In Renibacterium salmoninarum (strain ATCC 33209 / DSM 20767 / JCM 11484 / NBRC 15589 / NCIMB 2235), this protein is Argininosuccinate lyase.